The following is an 89-amino-acid chain: Large ribosomal subunit protein bL27 (89 aa).

Residues 1 to 20 are disordered; that stretch reads MAHKKAGGSSRNGRDSAGRR.

The protein belongs to the bacterial ribosomal protein bL27 family.

This Rhizorhabdus wittichii (strain DSM 6014 / CCUG 31198 / JCM 15750 / NBRC 105917 / EY 4224 / RW1) (Sphingomonas wittichii) protein is Large ribosomal subunit protein bL27.